The chain runs to 176 residues: NADH-quinone oxidoreductase subunit I 1 (176 aa).

2 consecutive 4Fe-4S ferredoxin-type domains span residues 45–77 and 87–116; these read IVLT…MEAT and RWFR…MTPD. [4Fe-4S] cluster is bound by residues Cys-57, Cys-60, Cys-63, Cys-67, Cys-96, Cys-99, Cys-102, and Cys-106.

It belongs to the complex I 23 kDa subunit family. In terms of assembly, NDH-1 is composed of 14 different subunits. Subunits NuoA, H, J, K, L, M, N constitute the membrane sector of the complex. Requires [4Fe-4S] cluster as cofactor.

Its subcellular location is the cell inner membrane. The enzyme catalyses a quinone + NADH + 5 H(+)(in) = a quinol + NAD(+) + 4 H(+)(out). Its function is as follows. NDH-1 shuttles electrons from NADH, via FMN and iron-sulfur (Fe-S) centers, to quinones in the respiratory chain. The immediate electron acceptor for the enzyme in this species is believed to be ubiquinone. Couples the redox reaction to proton translocation (for every two electrons transferred, four hydrogen ions are translocated across the cytoplasmic membrane), and thus conserves the redox energy in a proton gradient. In Geobacter metallireducens (strain ATCC 53774 / DSM 7210 / GS-15), this protein is NADH-quinone oxidoreductase subunit I 1.